The following is a 303-amino-acid chain: GTPase Era (303 aa).

An Era-type G domain is found at 9–176; that stretch reads KSGFVSIIGR…VEQIVEHMEE (168 aa). The interval 17–24 is G1; it reads GRPNVGKS. A GTP-binding site is contributed by 17-24; that stretch reads GRPNVGKS. The interval 43–47 is G2; the sequence is QTTRN. A G3 region spans residues 64-67; that stretch reads DTPG. Residues 64–68 and 126–129 each bind GTP; these read DTPGI and NKID. The G4 stretch occupies residues 126–129; the sequence is NKID. The G5 stretch occupies residues 155–157; it reads ISA. The KH type-2 domain occupies 199–284; sequence IREKVLHLTK…YLELWVKVQK (86 aa).

Belongs to the TRAFAC class TrmE-Era-EngA-EngB-Septin-like GTPase superfamily. Era GTPase family. In terms of assembly, monomer.

Its subcellular location is the cytoplasm. It is found in the cell membrane. In terms of biological role, an essential GTPase that binds both GDP and GTP, with rapid nucleotide exchange. Plays a role in 16S rRNA processing and 30S ribosomal subunit biogenesis and possibly also in cell cycle regulation and energy metabolism. This chain is GTPase Era, found in Shouchella clausii (strain KSM-K16) (Alkalihalobacillus clausii).